A 356-amino-acid chain; its full sequence is Iron-regulated protein A (356 aa).

A signal peptide spans 1–44 (MIVTGSQVRQGLNTWFVLPLRRTAIGLGCAGVATLFSACGQTQA). 2 hydrophilic regions span residues 75–145 (QALQ…EQRE) and 240–310 (GGPL…ATAR).

As to quaternary structure, the iron-regulated protein A is one unit of the protein complex CPVI-4, which is synthesized under iron deficient conditions.

It is found in the cell inner membrane. In terms of biological role, irpA occurs under iron-deficient growth conditions in cyanobacterium Synechococcus and disappears in cells recovering from iron starvation. It seems to be involved in iron acquisition, uptake or storage. The protein is Iron-regulated protein A (irpA) of Synechococcus elongatus (strain ATCC 33912 / PCC 7942 / FACHB-805) (Anacystis nidulans R2).